Here is a 67-residue protein sequence, read N- to C-terminus: DNA-directed RNA polymerase subunit omega (67 aa).

Belongs to the RNA polymerase subunit omega family. As to quaternary structure, the RNAP catalytic core consists of 2 alpha, 1 beta, 1 beta' and 1 omega subunit. When a sigma factor is associated with the core the holoenzyme is formed, which can initiate transcription.

The enzyme catalyses RNA(n) + a ribonucleoside 5'-triphosphate = RNA(n+1) + diphosphate. In terms of biological role, promotes RNA polymerase assembly. Latches the N- and C-terminal regions of the beta' subunit thereby facilitating its interaction with the beta and alpha subunits. In Acidovorax ebreus (strain TPSY) (Diaphorobacter sp. (strain TPSY)), this protein is DNA-directed RNA polymerase subunit omega.